Reading from the N-terminus, the 532-residue chain is MAPSFTARIQLFLLRALGFLIGLVGRAALVLGGPKFASKTPRPVTEPLLLLSGMQLAKLIRQRKVKCIDVVQAYINRIKDVNPMINGIVKYRFEEAMKEAHAVDQKLAEKQEDEATLENKWPFLGVPLTVKEAFQLQGMPNSSGLMNRRDAIAKTDATVVALLKGAGAIPLGITNCSELCMWYESSNKIYGRSNNPYDLQHIVGGSSGGEGCTLAAACSVIGVGSDIGGSIRMPAFFNGIFGHKPSPGVVPNKGQFPLAVGAQELFLCTGPMCRYAEDLAPMLKVMAGPGIKRLKLDTKVHLKDLKFYWMEHDGGSFLMSKVDQDLIMTQKKVVVHLETILGASVQHVKLKKMKYSFQLWIAMMSAKGHDGKEPVKFVDLLGDHGKHVSPLWELIKWCLGLSVYTIPSIGLALLEEKLRYSNEKYQKFKAVEESLRKELVDMLGDDGVFLYPSHPTVAPKHHVPLTRPFNFAYTGVFSALGLPVTQCPLGLNAKGLPLGIQVVAGPFNDHLTLAVAQYLEKTFGGWVCPGKF.

The chain crosses the membrane as a helical span at residues 11 to 31; that stretch reads LFLLRALGFLIGLVGRAALVL. Active-site charge relay system residues include Lys131 and Ser206. Ser230 serves as the catalytic Acyl-ester intermediate.

This sequence belongs to the amidase family. In terms of assembly, homodimer. Expressed in kidney, liver, lung, prostate, heart and ovary.

It localises to the membrane. It is found in the lipid droplet. It carries out the reaction N-(5Z,8Z,11Z,14Z-eicosatetraenoyl)-ethanolamine + H2O = ethanolamine + (5Z,8Z,11Z,14Z)-eicosatetraenoate. The enzyme catalyses (9Z)-octadecenamide + H2O = (9Z)-octadecenoate + NH4(+). The catalysed reaction is N-(9Z-octadecenoyl) ethanolamine + H2O = ethanolamine + (9Z)-octadecenoate. It catalyses the reaction N-hexadecanoylethanolamine + H2O = ethanolamine + hexadecanoate. With respect to regulation, inhibited by O-aryl carbamates and alpha-keto heterocytes. Functionally, catalyzes the hydrolysis of endogenous amidated lipids like the sleep-inducing lipid oleamide ((9Z)-octadecenamide), the endocannabinoid anandamide (N-(5Z,8Z,11Z,14Z-eicosatetraenoyl)-ethanolamine), as well as other fatty amides, to their corresponding fatty acids, thereby regulating the signaling functions of these molecules. Hydrolyzes monounsaturated substrate anandamide preferentially as compared to polyunsaturated substrates. The chain is Fatty-acid amide hydrolase 2 (FAAH2) from Homo sapiens (Human).